Here is an 82-residue protein sequence, read N- to C-terminus: RNA-binding protein Hfq (82 aa).

The region spanning 10–70 (DAFLNQVRKD…ISTVAPLRPI (61 aa)) is the Sm domain.

Belongs to the Hfq family. In terms of assembly, homohexamer.

Functionally, RNA chaperone that binds small regulatory RNA (sRNAs) and mRNAs to facilitate mRNA translational regulation in response to envelope stress, environmental stress and changes in metabolite concentrations. Also binds with high specificity to tRNAs. The chain is RNA-binding protein Hfq from Syntrophomonas wolfei subsp. wolfei (strain DSM 2245B / Goettingen).